The sequence spans 238 residues: Probable transcriptional regulatory protein M6_Spy0297 (238 aa).

The protein belongs to the TACO1 family. YeeN subfamily.

It is found in the cytoplasm. This is Probable transcriptional regulatory protein M6_Spy0297 from Streptococcus pyogenes serotype M6 (strain ATCC BAA-946 / MGAS10394).